The following is a 396-amino-acid chain: 1-deoxy-D-xylulose 5-phosphate reductoisomerase (396 aa).

NADPH-binding residues include Thr-17, Gly-18, Ser-19, Ile-20, Asn-47, and Asn-130. Lys-131 lines the 1-deoxy-D-xylulose 5-phosphate pocket. Position 132 (Glu-132) interacts with NADPH. Asp-156 lines the Mn(2+) pocket. 1-deoxy-D-xylulose 5-phosphate-binding residues include Ser-157, Glu-158, Ser-182, and His-205. Glu-158 contributes to the Mn(2+) binding site. Gly-211 is a binding site for NADPH. 1-deoxy-D-xylulose 5-phosphate is bound by residues Ser-218, Asn-223, Lys-224, and Glu-227. Glu-227 provides a ligand contact to Mn(2+).

Belongs to the DXR family. Requires Mg(2+) as cofactor. Mn(2+) is required as a cofactor.

It catalyses the reaction 2-C-methyl-D-erythritol 4-phosphate + NADP(+) = 1-deoxy-D-xylulose 5-phosphate + NADPH + H(+). Its pathway is isoprenoid biosynthesis; isopentenyl diphosphate biosynthesis via DXP pathway; isopentenyl diphosphate from 1-deoxy-D-xylulose 5-phosphate: step 1/6. Catalyzes the NADPH-dependent rearrangement and reduction of 1-deoxy-D-xylulose-5-phosphate (DXP) to 2-C-methyl-D-erythritol 4-phosphate (MEP). This Rhizobium etli (strain ATCC 51251 / DSM 11541 / JCM 21823 / NBRC 15573 / CFN 42) protein is 1-deoxy-D-xylulose 5-phosphate reductoisomerase.